Reading from the N-terminus, the 500-residue chain is Ephrin type-B receptor 3 (500 aa).

One can recognise a Fibronectin type-III domain in the interval 1–64 (PLLVLDLIIQ…NPVDFSTSLY (64 aa)). Residues 1–113 (PLLVLDLIIQ…ERSVQDLLPL (113 aa)) lie on the Extracellular side of the membrane. A disordered region spans residues 76–103 (HLRRREELTTTTTGLKSREERFQKSDDP). Basic and acidic residues predominate over residues 91–103 (KSREERFQKSDDP). A helical membrane pass occupies residues 114-134 (IVGSASAGFVVILAMIVIAVV). Residues 135–500 (CLRRQRTGSE…QMSQTLPIRV (366 aa)) are Cytoplasmic-facing. Residue Tyr-168 is modified to Phosphotyrosine; by autocatalysis. A Protein kinase domain is found at 187–450 (VKIEEVIGAG…QIVSTLDKFL (264 aa)). Residues 193 to 201 (IGAGEFGEV) and Lys-219 contribute to the ATP site. Catalysis depends on Asp-312, which acts as the Proton acceptor. Residues 421-500 (LHQLMLECWV…QMSQTLPIRV (80 aa)) enclose the SAM domain. Positions 498–500 (IRV) match the PDZ-binding motif.

The protein belongs to the protein kinase superfamily. Tyr protein kinase family. Ephrin receptor subfamily. Heterotetramer upon binding of the ligand. The heterotetramer is composed of an ephrin dimer and a receptor dimer. Oligomerization is probably required to induce biological responses. Phosphorylated. Autophosphorylates upon ligand-binding. Autophosphorylation on Tyr-168 is required for interaction with SH2 domain-containing proteins. As to expression, widely expressed in the developing nervous system.

The protein localises to the cell membrane. The protein resides in the cell projection. It is found in the dendrite. The catalysed reaction is L-tyrosyl-[protein] + ATP = O-phospho-L-tyrosyl-[protein] + ADP + H(+). In terms of biological role, receptor tyrosine kinase which binds promiscuously transmembrane ephrin-B family ligands residing on adjacent cells, leading to contact-dependent bidirectional signaling into neighboring cells. The signaling pathway downstream of the receptor is referred to as forward signaling while the signaling pathway downstream of the ephrin ligand is referred to as reverse signaling. Generally has an overlapping and redundant function with EPHB2. Like EPHB2, functions in axon guidance during development. In addition to its role in axon guidance also plays an important redundant role with other ephrin-B receptors in development and maturation of dendritic spines and the formation of excitatory synapses. May control other aspects of development through regulation of cell migration and positioning. May play a role in early pattern formation within the developing nervous system. The chain is Ephrin type-B receptor 3 (ephb3) from Danio rerio (Zebrafish).